Consider the following 570-residue polypeptide: Putative pyruvate decarboxylase C3G9.11c (570 aa).

Positions 30 and 119 each coordinate pyruvate. Thiamine diphosphate contacts are provided by residues Thr396 and 419-421 (GSI). Asp451 serves as a coordination point for Mg(2+). Thiamine diphosphate-binding positions include 452–453 (GS) and 478–483 (NKGYTI). Mg(2+) is bound by residues Asn478 and Gly480. Glu484 contributes to the pyruvate binding site.

This sequence belongs to the TPP enzyme family. As to quaternary structure, homotetramer. It depends on Mg(2+) as a cofactor. Thiamine diphosphate is required as a cofactor.

It localises to the cytoplasm. Its subcellular location is the nucleus. The catalysed reaction is a 2-oxocarboxylate + H(+) = an aldehyde + CO2. It carries out the reaction pyruvate + H(+) = acetaldehyde + CO2. The protein is Putative pyruvate decarboxylase C3G9.11c of Schizosaccharomyces pombe (strain 972 / ATCC 24843) (Fission yeast).